The primary structure comprises 195 residues: Imidazoleglycerol-phosphate dehydratase (195 aa).

Belongs to the imidazoleglycerol-phosphate dehydratase family.

The protein localises to the cytoplasm. It carries out the reaction D-erythro-1-(imidazol-4-yl)glycerol 3-phosphate = 3-(imidazol-4-yl)-2-oxopropyl phosphate + H2O. The protein operates within amino-acid biosynthesis; L-histidine biosynthesis; L-histidine from 5-phospho-alpha-D-ribose 1-diphosphate: step 6/9. The sequence is that of Imidazoleglycerol-phosphate dehydratase from Alkaliphilus metalliredigens (strain QYMF).